We begin with the raw amino-acid sequence, 500 residues long: Arabinofuranosidase/B-xylosidase (500 aa).

An N-terminal signal peptide occupies residues 1–21 (MLSNARIIAAGCIAAGSLVAA). Asn467 carries an N-linked (GlcNAc...) asparagine glycan.

This sequence belongs to the glycosyl hydrolase 54 family.

The catalysed reaction is Hydrolysis of terminal non-reducing alpha-L-arabinofuranoside residues in alpha-L-arabinosides.. The enzyme catalyses Hydrolysis of (1-&gt;4)-beta-D-xylans, to remove successive D-xylose residues from the non-reducing termini.. In Trichoderma koningii (Hypocrea koningii), this protein is Arabinofuranosidase/B-xylosidase (xyl1).